The sequence spans 158 residues: Ribosomal RNA large subunit methyltransferase H (158 aa).

S-adenosyl-L-methionine-binding positions include Leu74, Gly105, and 124-129 (LGPLTL).

This sequence belongs to the RNA methyltransferase RlmH family. Homodimer.

Its subcellular location is the cytoplasm. The enzyme catalyses pseudouridine(1915) in 23S rRNA + S-adenosyl-L-methionine = N(3)-methylpseudouridine(1915) in 23S rRNA + S-adenosyl-L-homocysteine + H(+). Specifically methylates the pseudouridine at position 1915 (m3Psi1915) in 23S rRNA. This Xylella fastidiosa (strain 9a5c) protein is Ribosomal RNA large subunit methyltransferase H.